We begin with the raw amino-acid sequence, 462 residues long: MSLEALFNPKSVAVIGASAKPGKIGYAIMKNLIEYGYEGKIYPVNIKGGEIEINGRKFKVYKSVLEIPDEVDMAVIVVPAKFVPQVLEECGQKGVKVVPIISSGFGELGEEGKKVEQQLVETARKYGMRILGPNIFGVVYTPAKLNATFGPTDVLPGPLALISQSGALGIALMGWTILEKIGLSAVVSVGNKADIDDADLLEFFKDDENTRAILIYMEGVKDGRRFMEVAKEVSKKKPIIVIKAGRSERGAKAAASHTGSLAGSDKVYSAAFKQSGVLRAYTIGEAFDWARALSNLPEPQGDNVVIITNGGGIGVMATDAAEEEGLHLYDNLEELKIFANHMPPFGSYKNPVDLTGMADGKSYEGAIRDALAHPEMHSIAVLYCQTAVLDPRELAEIVIREYNESGRKKPLVVAIVGGIEAKEAIDMLNENGIPAYPEPERAIKALSALYKWSKWKAKHKEK.

Belongs to the acetate CoA ligase alpha subunit family. In terms of assembly, heterotetramer of two alpha and two beta subunits.

Its subcellular location is the cytoplasm. The catalysed reaction is acetate + ATP + CoA = acetyl-CoA + ADP + phosphate. With respect to regulation, activity is dependent on magnesium. Catalyzes the reversible formation of acetate and ATP from acetyl-CoA by using ADP and phosphate. Can use other substrates such as isobutyryl-CoA, propionyl-CoA and butyryl-CoA, but not indoleacetyl-CoA, phenylacetyl-CoA or succinyl-CoA. Seems to be involved primarily in the conversion of acetyl-CoA to acetate. Participates in the degradation of branched-chain amino acids via branched-chain-acyl-CoA esters. This Pyrococcus furiosus (strain ATCC 43587 / DSM 3638 / JCM 8422 / Vc1) protein is Acetate--CoA ligase [ADP-forming] I subunit alpha.